A 333-amino-acid polypeptide reads, in one-letter code: Cell division protein FtsQ (333 aa).

The segment at 1-99 (MTGTGPHGDP…ARREAKRRAV (99 aa)) is disordered. Residues 1–118 (MTGTGPHGDP…VPRNTIRGLK (118 aa)) are Cytoplasmic-facing. Residues 11–22 (AEDPAGPDDTAA) show a composition bias toward acidic residues. The segment covering 44 to 57 (TTETTAQTGTTAEA) has biased composition (low complexity). A compositionally biased stretch (basic and acidic residues) spans 73–92 (ERAERRAARDRAMAIEQARR). A helical membrane pass occupies residues 119 to 139 (VLMWAALVSVLAVALGLLLYF). Residues 140–333 (TPIMSARNVE…VSSPDLPTVK (194 aa)) are Extracellular-facing. The region spanning 143–211 (MSARNVEVSG…STLKISIVER (69 aa)) is the POTRA domain.

This sequence belongs to the FtsQ/DivIB family. FtsQ subfamily.

The protein localises to the cell membrane. In terms of biological role, essential cell division protein. The polypeptide is Cell division protein FtsQ (Mycolicibacterium smegmatis (strain ATCC 700084 / mc(2)155) (Mycobacterium smegmatis)).